Consider the following 648-residue polypeptide: Phosphomethylpyrimidine synthase (648 aa).

Substrate contacts are provided by residues Asn-236, Met-265, Tyr-294, His-330, 350–352 (SRG), 391–394 (DGLR), and Glu-430. Position 434 (His-434) interacts with Zn(2+). Tyr-457 is a binding site for substrate. His-498 contacts Zn(2+). The [4Fe-4S] cluster site is built by Cys-578, Cys-581, and Cys-586.

This sequence belongs to the ThiC family. As to quaternary structure, homodimer. [4Fe-4S] cluster serves as cofactor.

The catalysed reaction is 5-amino-1-(5-phospho-beta-D-ribosyl)imidazole + S-adenosyl-L-methionine = 4-amino-2-methyl-5-(phosphooxymethyl)pyrimidine + CO + 5'-deoxyadenosine + formate + L-methionine + 3 H(+). The protein operates within cofactor biosynthesis; thiamine diphosphate biosynthesis. In terms of biological role, catalyzes the synthesis of the hydroxymethylpyrimidine phosphate (HMP-P) moiety of thiamine from aminoimidazole ribotide (AIR) in a radical S-adenosyl-L-methionine (SAM)-dependent reaction. In Aliivibrio salmonicida (strain LFI1238) (Vibrio salmonicida (strain LFI1238)), this protein is Phosphomethylpyrimidine synthase.